We begin with the raw amino-acid sequence, 377 residues long: MAPVALEQENHLRDAEFNRAMHGKSAQFRGGFAALRGKDSAAQKAAVDEYFKHWDNKPAEDETEETRAARRAEYATLTRHYYNLATDLYEYGWGTSFHFCRFAQGEPFYQAIARHEHYLAHQMGIKEGMKVLDVGCGVGGPAREIVKFTDANVVGLNNNDYQIERATRYAEREGLSHKLSFVKGDFMQMKFPDNSFDAVYAIEATVHAPDLEGVYKEIFRVLKPGGVFGVYEWLMTDAYDNDNPEHRRIRLGIELGDGISNMVKVSEGLTAFKNAGFELLHNEDLADRPDAIPWYYPLAGSFKHMTSPWDFFTIARMTWWGRGIAHRFCGAMETIGLFPKGTQKTADSLAIAGDCLVAGGEKKLFTPMYLMVGRKPE.

It belongs to the class I-like SAM-binding methyltransferase superfamily. Erg6/SMT family.

It localises to the microsome. It is found in the mitochondrion. It carries out the reaction lanosterol + S-adenosyl-L-methionine = eburicol + S-adenosyl-L-homocysteine + H(+). Its pathway is steroid metabolism; ergosterol biosynthesis. Specific and total activity is decreased in presence of alpha-bisabolol. Functionally, sterol 24-C-methyltransferase; part of the third module of ergosterol biosynthesis pathway that includes the late steps of the pathway. Methylates lanosterol at C-24 to produce eburicol. The third module or late pathway involves the ergosterol synthesis itself through consecutive reactions that mainly occur in the endoplasmic reticulum (ER) membrane. Firstly, the squalene synthase erg9 catalyzes the condensation of 2 farnesyl pyrophosphate moieties to form squalene, which is the precursor of all steroids. Squalene synthase is crucial for balancing the incorporation of farnesyl diphosphate (FPP) into sterol and nonsterol isoprene synthesis. Secondly, squalene is converted into lanosterol by the consecutive action of the squalene epoxidase erg1 and the lanosterol synthase erg7. Then, the delta(24)-sterol C-methyltransferase erg6 methylates lanosterol at C-24 to produce eburicol. Eburicol is the substrate of the sterol 14-alpha demethylase encoded by cyp51A and cyp51B, to yield 4,4,24-trimethyl ergosta-8,14,24(28)-trienol. The C-14 reductase erg24 then reduces the C14=C15 double bond which leads to 4,4-dimethylfecosterol. A sequence of further demethylations at C-4, involving the C-4 demethylation complex containing the C-4 methylsterol oxidases erg25A or erg25B, the sterol-4-alpha-carboxylate 3-dehydrogenase erg26 and the 3-keto-steroid reductase erg27, leads to the production of fecosterol via 4-methylfecosterol. The C-8 sterol isomerase erg2 then catalyzes the reaction which results in unsaturation at C-7 in the B ring of sterols and thus converts fecosterol to episterol. The sterol-C5-desaturase erg3B then catalyzes the introduction of a C-5 double bond in the B ring to produce 5-dehydroepisterol. The 2 other sterol-C5-desaturases, erg3A and erg3C, seem to be less important in ergosterol biosynthesis. The C-22 sterol desaturase erg5 further converts 5-dehydroepisterol into ergosta-5,7,22,24(28)-tetraen-3beta-ol by forming the C-22(23) double bond in the sterol side chain. Finally, ergosta-5,7,22,24(28)-tetraen-3beta-ol is substrate of the C-24(28) sterol reductases erg4A and erg4B to produce ergosterol. Possible alternative sterol biosynthetic pathways might exist from fecosterol to ergosterol, depending on the activities of the erg3 isoforms. This Aspergillus fumigatus (strain ATCC MYA-4609 / CBS 101355 / FGSC A1100 / Af293) (Neosartorya fumigata) protein is Sterol 24-C-methyltransferase erg6.